Reading from the N-terminus, the 215-residue chain is Adenylate kinase (215 aa).

Residue 10 to 15 coordinates ATP; the sequence is GTGKGT. An NMP region spans residues 30 to 59; it reads STGHILRKISTKKTLFGEKIKNIINSGKLV. AMP contacts are provided by residues threonine 31, arginine 36, 57–59, 85–88, and glutamine 92; these read KLV and GFPR. The segment at 122-157 is LID; sequence TRTINPITGTIYNNVIQKNSELKNLKINTLKSRLDD. ATP-binding positions include arginine 123 and 132-133; that span reads IY. AMP is bound by residues arginine 154 and arginine 165. Asparagine 198 serves as a coordination point for ATP.

The protein belongs to the adenylate kinase family. Monomer.

It localises to the cytoplasm. The catalysed reaction is AMP + ATP = 2 ADP. Its pathway is purine metabolism; AMP biosynthesis via salvage pathway; AMP from ADP: step 1/1. Functionally, catalyzes the reversible transfer of the terminal phosphate group between ATP and AMP. Plays an important role in cellular energy homeostasis and in adenine nucleotide metabolism. The polypeptide is Adenylate kinase (Buchnera aphidicola subsp. Baizongia pistaciae (strain Bp)).